We begin with the raw amino-acid sequence, 152 residues long: Deoxyuridine 5'-triphosphate nucleotidohydrolase (152 aa).

Substrate-binding positions include 71–73, N84, 88–90, and M98; these read RSG and LID.

Belongs to the dUTPase family. The cofactor is Mg(2+).

The catalysed reaction is dUTP + H2O = dUMP + diphosphate + H(+). It participates in pyrimidine metabolism; dUMP biosynthesis; dUMP from dCTP (dUTP route): step 2/2. Functionally, this enzyme is involved in nucleotide metabolism: it produces dUMP, the immediate precursor of thymidine nucleotides and it decreases the intracellular concentration of dUTP so that uracil cannot be incorporated into DNA. This is Deoxyuridine 5'-triphosphate nucleotidohydrolase from Shewanella sp. (strain MR-7).